A 430-amino-acid polypeptide reads, in one-letter code: Serine--tRNA ligase (430 aa).

237–239 provides a ligand contact to L-serine; that stretch reads TAE. 268–270 is an ATP binding site; the sequence is RSE. Glu-291 is an L-serine binding site. 355–358 contributes to the ATP binding site; the sequence is EISS. Ser-391 serves as a coordination point for L-serine.

It belongs to the class-II aminoacyl-tRNA synthetase family. Type-1 seryl-tRNA synthetase subfamily. As to quaternary structure, homodimer. The tRNA molecule binds across the dimer.

It is found in the cytoplasm. It carries out the reaction tRNA(Ser) + L-serine + ATP = L-seryl-tRNA(Ser) + AMP + diphosphate + H(+). The enzyme catalyses tRNA(Sec) + L-serine + ATP = L-seryl-tRNA(Sec) + AMP + diphosphate + H(+). It functions in the pathway aminoacyl-tRNA biosynthesis; selenocysteinyl-tRNA(Sec) biosynthesis; L-seryl-tRNA(Sec) from L-serine and tRNA(Sec): step 1/1. Functionally, catalyzes the attachment of serine to tRNA(Ser). Is also able to aminoacylate tRNA(Sec) with serine, to form the misacylated tRNA L-seryl-tRNA(Sec), which will be further converted into selenocysteinyl-tRNA(Sec). This is Serine--tRNA ligase from Escherichia fergusonii (strain ATCC 35469 / DSM 13698 / CCUG 18766 / IAM 14443 / JCM 21226 / LMG 7866 / NBRC 102419 / NCTC 12128 / CDC 0568-73).